A 424-amino-acid polypeptide reads, in one-letter code: UDP-glycosyltransferase 76H1 (424 aa).

Residues Ser-248, 306–307, 324–332, and 346–349 contribute to the UDP-alpha-D-glucose site; these read WA, HCGWNSTIE, and FADQ.

The protein belongs to the UDP-glycosyltransferase family.

Functionally, may glycosylate diterpenes or flavonols in leaves. The polypeptide is UDP-glycosyltransferase 76H1 (Stevia rebaudiana (Stevia)).